Consider the following 153-residue polypeptide: Ribosome maturation factor RimP (153 aa).

The protein belongs to the RimP family.

It is found in the cytoplasm. Required for maturation of 30S ribosomal subunits. The sequence is that of Ribosome maturation factor RimP from Histophilus somni (strain 2336) (Haemophilus somnus).